The primary structure comprises 147 residues: Ribonuclease H (147 aa).

The RNase H type-1 domain maps to 3–145 (TEDRVEIYTD…ADQLANKGVE (143 aa)). Residues Asp12, Glu50, Asp72, and Asp137 each contribute to the Mg(2+) site.

The protein belongs to the RNase H family. Monomer. The cofactor is Mg(2+).

The protein localises to the cytoplasm. It carries out the reaction Endonucleolytic cleavage to 5'-phosphomonoester.. Functionally, endonuclease that specifically degrades the RNA of RNA-DNA hybrids. In Chromobacterium violaceum (strain ATCC 12472 / DSM 30191 / JCM 1249 / CCUG 213 / NBRC 12614 / NCIMB 9131 / NCTC 9757 / MK), this protein is Ribonuclease H.